A 602-amino-acid chain; its full sequence is Glutaminase liver isoform, mitochondrial (602 aa).

Residues 1 to 14 constitute a mitochondrion transit peptide; the sequence is MRSMRALQNALSRA. 2 disordered regions span residues 1–28 and 46–67; these read MRSM…HPSR and QGRG…SNSG. A substrate-binding site is contributed by Ser-219. N6-succinyllysine is present on Lys-253. Asn-268 is a substrate binding site. An N6-acetyllysine mark is found at Lys-279 and Lys-284. Substrate is bound by residues Glu-314 and Asn-321. The residue at position 329 (Lys-329) is an N6-acetyllysine. Substrate is bound by residues Tyr-347, Tyr-399, and Val-417. ANK repeat units follow at residues 518 to 551 and 552 to 585; these read DSRT…VKDR and WGNI…SETQ.

It belongs to the glutaminase family. As to quaternary structure, homotetramer, dimer of dimers. Does not assemble into higher oligomers. Interacts with the PDZ domain of the syntrophin SNTA1. Interacts with the PDZ domain of TAX1BP3. As to expression, liver specific.

Its subcellular location is the mitochondrion. It catalyses the reaction L-glutamine + H2O = L-glutamate + NH4(+). Plays an important role in the regulation of glutamine catabolism. Promotes mitochondrial respiration and increases ATP generation in cells by catalyzing the synthesis of glutamate and alpha-ketoglutarate. Increases cellular anti-oxidant function via NADH and glutathione production. May play a role in preventing tumor proliferation. The sequence is that of Glutaminase liver isoform, mitochondrial (Gls2) from Rattus norvegicus (Rat).